We begin with the raw amino-acid sequence, 211 residues long: Outer-membrane lipoprotein carrier protein (211 aa).

Residues 1 to 24 (MNTIKILIGLLGIFLFSLSGIVSA) form the signal peptide.

It belongs to the LolA family. As to quaternary structure, monomer.

It localises to the periplasm. Functionally, participates in the translocation of lipoproteins from the inner membrane to the outer membrane. Only forms a complex with a lipoprotein if the residue after the N-terminal Cys is not an aspartate (The Asp acts as a targeting signal to indicate that the lipoprotein should stay in the inner membrane). The sequence is that of Outer-membrane lipoprotein carrier protein from Coxiella burnetii (strain RSA 331 / Henzerling II).